The chain runs to 247 residues: 4-hydroxy-tetrahydrodipicolinate reductase (247 aa).

Residues 12–17 (GITGRM), 78–80 (GTT), and 102–105 (AANF) contribute to the NAD(+) site. H136 (proton donor/acceptor) is an active-site residue. H137 serves as a coordination point for (S)-2,3,4,5-tetrahydrodipicolinate. K140 serves as the catalytic Proton donor. 146–147 (GT) is a (S)-2,3,4,5-tetrahydrodipicolinate binding site.

This sequence belongs to the DapB family.

The protein resides in the cytoplasm. It carries out the reaction (S)-2,3,4,5-tetrahydrodipicolinate + NAD(+) + H2O = (2S,4S)-4-hydroxy-2,3,4,5-tetrahydrodipicolinate + NADH + H(+). The enzyme catalyses (S)-2,3,4,5-tetrahydrodipicolinate + NADP(+) + H2O = (2S,4S)-4-hydroxy-2,3,4,5-tetrahydrodipicolinate + NADPH + H(+). It functions in the pathway amino-acid biosynthesis; L-lysine biosynthesis via DAP pathway; (S)-tetrahydrodipicolinate from L-aspartate: step 4/4. Its function is as follows. Catalyzes the conversion of 4-hydroxy-tetrahydrodipicolinate (HTPA) to tetrahydrodipicolinate. This Acidiphilium cryptum (strain JF-5) protein is 4-hydroxy-tetrahydrodipicolinate reductase.